A 70-amino-acid polypeptide reads, in one-letter code: Large ribosomal subunit protein eL24 (70 aa).

The Zn(2+) site is built by Cys-7, Cys-10, Cys-33, and Cys-37. Residues 7–37 (CSFCGYEIEPGKGKMVVEKDGTVLYFCSSKC) form a C4-type zinc finger.

Belongs to the eukaryotic ribosomal protein eL24 family. Part of the 50S ribosomal subunit. Forms a cluster with proteins L3 and L14. Zn(2+) serves as cofactor.

Functionally, binds to the 23S rRNA. This Methanocaldococcus jannaschii (strain ATCC 43067 / DSM 2661 / JAL-1 / JCM 10045 / NBRC 100440) (Methanococcus jannaschii) protein is Large ribosomal subunit protein eL24.